The following is a 179-amino-acid chain: TM2 domain-containing protein Y66D12A.21 (179 aa).

Residues 1 to 18 (MRQLLLTLSLISVSASDA) form the signal peptide. Residues 19–82 (TVKCDDLDPN…IFNRTVPSAC (64 aa)) are Extracellular-facing. N75 carries an N-linked (GlcNAc...) asparagine glycan. A helical membrane pass occupies residues 83–105 (HYGAHVSYTTTVLLSIFLGFFGI). The TM2 domain maps to 88 to 135 (VSYTTTVLLSIFLGFFGIDRIYLGYYALGLIKMFSLGGLFVFWLVDII). Topologically, residues 106 to 109 (DRIY) are cytoplasmic. Residues 110–132 (LGYYALGLIKMFSLGGLFVFWLV) form a helical membrane-spanning segment. Residues 133–179 (DIILISLQLLGPADGTAYAMAYYGPKAQMIRFDSHTNFSFYTCDGCL) lie on the Extracellular side of the membrane. N169 carries N-linked (GlcNAc...) asparagine glycosylation.

The protein belongs to the TM2 family.

The protein localises to the membrane. The sequence is that of TM2 domain-containing protein Y66D12A.21 from Caenorhabditis elegans.